Consider the following 194-residue polypeptide: ATP-dependent Clp protease proteolytic subunit (194 aa).

Residue Ser-98 is the Nucleophile of the active site. His-123 is a catalytic residue.

It belongs to the peptidase S14 family. Fourteen ClpP subunits assemble into 2 heptameric rings which stack back to back to give a disk-like structure with a central cavity, resembling the structure of eukaryotic proteasomes.

The protein resides in the cytoplasm. It catalyses the reaction Hydrolysis of proteins to small peptides in the presence of ATP and magnesium. alpha-casein is the usual test substrate. In the absence of ATP, only oligopeptides shorter than five residues are hydrolyzed (such as succinyl-Leu-Tyr-|-NHMec, and Leu-Tyr-Leu-|-Tyr-Trp, in which cleavage of the -Tyr-|-Leu- and -Tyr-|-Trp bonds also occurs).. Functionally, cleaves peptides in various proteins in a process that requires ATP hydrolysis. Has a chymotrypsin-like activity. Plays a major role in the degradation of misfolded proteins. This chain is ATP-dependent Clp protease proteolytic subunit, found in Staphylococcus epidermidis (strain ATCC 35984 / DSM 28319 / BCRC 17069 / CCUG 31568 / BM 3577 / RP62A).